The sequence spans 331 residues: MIFRLADFHFPDSAARLYPDTPQRPWILEVGFGDGRFWPHYAATFPEAPNYLGVEISGVSLLKAERRLREAGLSNAVLTKLPATPLIREVVPAGSLDAIVVNFPDPWPKAGHAEHRLLRAPFFRLAASRLKPGGAVLLTTDHDEYFEFACREAEASGVMRAELTDPPPAALETKYARKWRELGLEVQHARFVPTHHPHVPHGTVARFPDSEDAPAVPHAILTLPAAFDPGAFHKHTARGGQTREDPVGWTVVLLELYRSLKQDGWVMLAHVVEGELTQEVLIGISARGDGSHLVRLASFGGPIITPGVKAAVGVVTDWLEEQGAAVRHRGY.

S-adenosyl-L-methionine-binding residues include Glu29, Glu55, and Asp105. Asp105 is a catalytic residue. Lys109 and Asp141 together coordinate substrate.

Belongs to the class I-like SAM-binding methyltransferase superfamily. TrmB family.

The enzyme catalyses guanosine(46) in tRNA + S-adenosyl-L-methionine = N(7)-methylguanosine(46) in tRNA + S-adenosyl-L-homocysteine. It functions in the pathway tRNA modification; N(7)-methylguanine-tRNA biosynthesis. Functionally, catalyzes the formation of N(7)-methylguanine at position 46 (m7G46) in tRNA. This Deinococcus geothermalis (strain DSM 11300 / CIP 105573 / AG-3a) protein is tRNA (guanine-N(7)-)-methyltransferase.